A 1035-amino-acid polypeptide reads, in one-letter code: Electrogenic sodium bicarbonate cotransporter 1 (1035 aa).

Topologically, residues 1–421 (MSSEKECLEN…FASDFYDALS (421 aa)) are cytoplasmic. Over residues 192–217 (SRLFSTPDNGSPTMTHRNLTSTSLND) the composition is skewed to polar residues. 2 disordered regions span residues 192-222 (SRLFSTPDNGSPTMTHRNLTSTSLNDVSDKP) and 348-389 (IEPP…GDSE). Over residues 376-389 (APHDDGGGGHGDSE) the composition is skewed to basic and acidic residues. Residues 422-446 (IQSLSAILFIYLGTVTNAITFGGLL) traverse the membrane as a helical segment. The Extracellular segment spans residues 447–456 (GDATENMQGV). The chain crosses the membrane as a helical span at residues 457–475 (LESFLGTAVSGAVFCLFGG). Residue glutamine 476 is a topological domain, cytoplasmic. A discontinuously helical transmembrane segment spans residues 477–497 (PLTILSSTGPVLVFERLLFNF). Residues 498–505 (SKDNDFDY) lie on the Extracellular side of the membrane. A helical membrane pass occupies residues 506-526 (LEFRLWIGLWSAFQCLILVAT). At 527 to 540 (DASFLVKYFTRFTE) the chain is on the cytoplasmic side. The helical transmembrane segment at 541–564 (EGFSSLISFIFIYDAFKKMIKLAD) threads the bilayer. The Extracellular portion of the chain corresponds to 565-648 (YYPINSHFKV…GSNCKYVPDI (84 aa)). Residues asparagine 591, asparagine 596, asparagine 609, and asparagine 617 are each glycosylated (N-linked (GlcNAc...) asparagine). The helical transmembrane segment at 649–666 (TLMSFILFLGTYTCSMAL) threads the bilayer. The Cytoplasmic segment spans residues 667–681 (KKFKTSRYFPTTARK). The helical transmembrane segment at 682–701 (LISDFAIILSILIFCGLDAL) threads the bilayer. Topologically, residues 702–735 (LGVDTPKLIVPSEFKPTSPNRGWFVPPFGGNPWW) are extracellular. The helical transmembrane segment at 736 to 763 (VYLAAAIPALLVTILIFMDQQITGVIVN) threads the bilayer. At 764-775 (RKEHKLKKGAGY) the chain is on the cytoplasmic side. Residues 776–792 (HLDLFWVAILMVVCSFM) form a helical membrane-spanning segment. Residue alanine 793 is a topological domain, extracellular. A discontinuously helical membrane pass occupies residues 794 to 811 (LPWYVAATVISIAHIDSL). At 812 to 833 (KMETETSAPGEQPKFLGVREQR) the chain is on the cytoplasmic side. The chain crosses the membrane as a helical span at residues 834–850 (VTGTVVFLLTGLSVFMA). At 851–857 (PILKFIP) the chain is on the extracellular side. Residues 858-874 (MPVLYGVFLYMGVASLN) traverse the membrane as a helical segment. The Cytoplasmic segment spans residues 875 to 916 (GVQFMDRLKLLLMPPKYQPDFIYLRHVPLRRVHLFTFLQVVC). Residues 917–942 (LAMLWILKSTVAAIIFPVMILALVAV) constitute an intramembrane region (discontinuously helical). Over 943–1035 (RKAMDYFFSQ…PTFLERHTSC (93 aa)) the chain is Cytoplasmic. The tract at residues 968–1035 (KKKEDEKKKK…PTFLERHTSC (68 aa)) is disordered. Over residues 1007–1035 (IMEKEPFLIDSKPSDRENSPTFLERHTSC) the composition is skewed to basic and acidic residues.

Belongs to the anion exchanger (TC 2.A.31) family. Homodimer. In terms of tissue distribution, expressed in kidney and to a lower extent in bladder, brain, intestine, large intestine and eye.

Its subcellular location is the basolateral cell membrane. It is found in the cell membrane. The catalysed reaction is 2 hydrogencarbonate(out) + Na(+)(out) = 2 hydrogencarbonate(in) + Na(+)(in). It carries out the reaction 3 hydrogencarbonate(out) + Na(+)(out) = 3 hydrogencarbonate(in) + Na(+)(in). Functionally, electrogenic sodium/bicarbonate cotransporter with a Na(+):HCO3(-) stoichiometry varying from 1:2 to 1:3. May regulate bicarbonate influx/efflux at the basolateral membrane of cells and regulate intracellular pH. This chain is Electrogenic sodium bicarbonate cotransporter 1 (SLC4A4), found in Ambystoma tigrinum (Eastern tiger salamander).